Reading from the N-terminus, the 237-residue chain is Ribosomal RNA small subunit methyltransferase G (237 aa).

S-adenosyl-L-methionine is bound by residues Gly-78, Phe-83, 129-130, and Arg-148; that span reads AE. Positions 218 to 237 are disordered; sequence KKETPNKYPRKAGMPNKRPL.

This sequence belongs to the methyltransferase superfamily. RNA methyltransferase RsmG family.

Its subcellular location is the cytoplasm. In terms of biological role, specifically methylates the N7 position of a guanine in 16S rRNA. This chain is Ribosomal RNA small subunit methyltransferase G, found in Streptococcus pneumoniae (strain ATCC BAA-255 / R6).